A 412-amino-acid polypeptide reads, in one-letter code: Poly-beta-1,6-N-acetyl-D-glucosamine synthase (412 aa).

Transmembrane regions (helical) follow at residues 6–26, 298–318, 332–352, and 366–386; these read FLLF…IYFY, IISI…FITA, IFLL…TVAL, and LIFV…VVLV.

This sequence belongs to the glycosyltransferase 2 family.

The protein localises to the cell membrane. N-acetylglucosaminyltransferase that catalyzes the polymerization of single monomer units of UDP-N-acetylglucosamine to produce the linear homomer poly-beta-1,6-N-acetyl-D-glucosamine (PNAG, also referred to as PIA), a biofilm adhesin polysaccharide. Requires IcaD for full activity. This chain is Poly-beta-1,6-N-acetyl-D-glucosamine synthase (icaA), found in Staphylococcus aureus (strain NCTC 8325 / PS 47).